The primary structure comprises 277 residues: Probable endonuclease 4 (277 aa).

His67, His107, Glu142, Asp176, His179, His211, Asp224, His226, and Glu256 together coordinate Zn(2+).

It belongs to the AP endonuclease 2 family. Zn(2+) is required as a cofactor.

The enzyme catalyses Endonucleolytic cleavage to 5'-phosphooligonucleotide end-products.. Endonuclease IV plays a role in DNA repair. It cleaves phosphodiester bonds at apurinic or apyrimidinic (AP) sites, generating a 3'-hydroxyl group and a 5'-terminal sugar phosphate. This chain is Probable endonuclease 4, found in Clostridium botulinum (strain Alaska E43 / Type E3).